We begin with the raw amino-acid sequence, 253 residues long: Indole-3-glycerol phosphate synthase (253 aa).

It belongs to the TrpC family.

The catalysed reaction is 1-(2-carboxyphenylamino)-1-deoxy-D-ribulose 5-phosphate + H(+) = (1S,2R)-1-C-(indol-3-yl)glycerol 3-phosphate + CO2 + H2O. The protein operates within amino-acid biosynthesis; L-tryptophan biosynthesis; L-tryptophan from chorismate: step 4/5. The polypeptide is Indole-3-glycerol phosphate synthase (Petrotoga mobilis (strain DSM 10674 / SJ95)).